A 679-amino-acid chain; its full sequence is Methionine--tRNA ligase (679 aa).

A 'HIGH' region motif is present at residues 14 to 24 (PYANGSIHLGH). Zn(2+) contacts are provided by cysteine 145, cysteine 148, cysteine 158, and cysteine 161. A 'KMSKS' region motif is present at residues 331–335 (KMSKS). Lysine 334 is a binding site for ATP. Positions 577 to 679 (TFAAVDLRVA…SGAKPGQRIK (103 aa)) constitute a tRNA-binding domain.

The protein belongs to the class-I aminoacyl-tRNA synthetase family. MetG type 1 subfamily. As to quaternary structure, homodimer. Zn(2+) serves as cofactor.

It localises to the cytoplasm. It carries out the reaction tRNA(Met) + L-methionine + ATP = L-methionyl-tRNA(Met) + AMP + diphosphate. Its function is as follows. Is required not only for elongation of protein synthesis but also for the initiation of all mRNA translation through initiator tRNA(fMet) aminoacylation. This is Methionine--tRNA ligase from Pseudomonas putida (strain ATCC 700007 / DSM 6899 / JCM 31910 / BCRC 17059 / LMG 24140 / F1).